The primary structure comprises 121 residues: Phosphoribosyl-ATP pyrophosphatase (121 aa).

This sequence belongs to the PRA-PH family.

Its subcellular location is the cytoplasm. The enzyme catalyses 1-(5-phospho-beta-D-ribosyl)-ATP + H2O = 1-(5-phospho-beta-D-ribosyl)-5'-AMP + diphosphate + H(+). Its pathway is amino-acid biosynthesis; L-histidine biosynthesis; L-histidine from 5-phospho-alpha-D-ribose 1-diphosphate: step 2/9. The chain is Phosphoribosyl-ATP pyrophosphatase from Burkholderia cenocepacia (strain HI2424).